Here is a 333-residue protein sequence, read N- to C-terminus: MIDITLPLTDIHRHLDGNIRAQTILDLGRQFNIALPAQTLETLIPHVQVTSTEPDLVSFLTKLDWGVKVLASLDACRRVAFENIEDAARNGLHYVELRFSPGYMAMAHQLPIAGVVEAVIDGVRDGCNTFGVEARLIGIMSRTFGEAACLQELDALLAHREKITALDLAGDELGFPGSLFLSHFNRARDAGWHITVHAGEAAGPESIWQAIRELGAERIGHGVKAVEDRALMDFLAQQRIGIESCLTSNIQTSTVASLADHPLKTFLEHGVLASLNTDDPAVQGVDIIHEYHVAAPAAGLSREQIRQAQINGLEIAFLSDDEKRALREKVAAA.

Zn(2+) is bound by residues His12 and His14. Residues His14, Asp16, and Gly170 each coordinate substrate. Residue His197 coordinates Zn(2+). Glu200 functions as the Proton donor in the catalytic mechanism. Asp278 contacts Zn(2+). Asp279 contributes to the substrate binding site.

Belongs to the metallo-dependent hydrolases superfamily. Adenosine and AMP deaminases family. Adenosine deaminase subfamily. Zn(2+) is required as a cofactor.

It catalyses the reaction adenosine + H2O + H(+) = inosine + NH4(+). It carries out the reaction 2'-deoxyadenosine + H2O + H(+) = 2'-deoxyinosine + NH4(+). Its function is as follows. Catalyzes the hydrolytic deamination of adenosine and 2-deoxyadenosine. The sequence is that of Adenosine deaminase from Salmonella schwarzengrund (strain CVM19633).